We begin with the raw amino-acid sequence, 237 residues long: tRNA (guanine-N(7)-)-methyltransferase (237 aa).

4 residues coordinate S-adenosyl-L-methionine: aspartate 35, glutamate 60, asparagine 87, and aspartate 113. Aspartate 113 is a catalytic residue. Substrate-binding residues include lysine 117 and aspartate 149.

Belongs to the class I-like SAM-binding methyltransferase superfamily. TrmB family.

It carries out the reaction guanosine(46) in tRNA + S-adenosyl-L-methionine = N(7)-methylguanosine(46) in tRNA + S-adenosyl-L-homocysteine. It functions in the pathway tRNA modification; N(7)-methylguanine-tRNA biosynthesis. In terms of biological role, catalyzes the formation of N(7)-methylguanine at position 46 (m7G46) in tRNA. The protein is tRNA (guanine-N(7)-)-methyltransferase of Synechococcus sp. (strain WH7803).